The sequence spans 367 residues: UDP-N-acetylglucosamine--N-acetylmuramyl-(pentapeptide) pyrophosphoryl-undecaprenol N-acetylglucosamine transferase (367 aa).

UDP-N-acetyl-alpha-D-glucosamine contacts are provided by residues Thr-15 to Gly-17, Asn-127, Arg-163, Ser-191, Ile-249, and Gln-294.

The protein belongs to the glycosyltransferase 28 family. MurG subfamily.

It localises to the cell inner membrane. It catalyses the reaction di-trans,octa-cis-undecaprenyl diphospho-N-acetyl-alpha-D-muramoyl-L-alanyl-D-glutamyl-meso-2,6-diaminopimeloyl-D-alanyl-D-alanine + UDP-N-acetyl-alpha-D-glucosamine = di-trans,octa-cis-undecaprenyl diphospho-[N-acetyl-alpha-D-glucosaminyl-(1-&gt;4)]-N-acetyl-alpha-D-muramoyl-L-alanyl-D-glutamyl-meso-2,6-diaminopimeloyl-D-alanyl-D-alanine + UDP + H(+). It functions in the pathway cell wall biogenesis; peptidoglycan biosynthesis. Cell wall formation. Catalyzes the transfer of a GlcNAc subunit on undecaprenyl-pyrophosphoryl-MurNAc-pentapeptide (lipid intermediate I) to form undecaprenyl-pyrophosphoryl-MurNAc-(pentapeptide)GlcNAc (lipid intermediate II). The chain is UDP-N-acetylglucosamine--N-acetylmuramyl-(pentapeptide) pyrophosphoryl-undecaprenol N-acetylglucosamine transferase from Burkholderia orbicola (strain MC0-3).